We begin with the raw amino-acid sequence, 671 residues long: UvrABC system protein B (671 aa).

One can recognise a Helicase ATP-binding domain in the interval 25-412; the sequence is EGIDAGLAHQ…AGRIVEQVVR (388 aa). 38-45 lines the ATP pocket; that stretch reads GVTGSGKT. The Beta-hairpin motif lies at 91–114; it reads YYDYYQPEAYVPSSDTFIEKDASI. In terms of domain architecture, Helicase C-terminal spans 429-582; the sequence is QVDDLLSEIH…QIAFNLEHGI (154 aa). Positions 601-625 are disordered; the sequence is PGSRSKKRKGMAKAAEESARYENEL. Residues 614 to 625 are compositionally biased toward basic and acidic residues; that stretch reads AAEESARYENEL. A UVR domain is found at 632-667; that stretch reads NKRIRQLEEKMYQLARDLEFEAAAQMRDEIGKLRER.

This sequence belongs to the UvrB family. In terms of assembly, forms a heterotetramer with UvrA during the search for lesions. Interacts with UvrC in an incision complex.

It localises to the cytoplasm. The UvrABC repair system catalyzes the recognition and processing of DNA lesions. A damage recognition complex composed of 2 UvrA and 2 UvrB subunits scans DNA for abnormalities. Upon binding of the UvrA(2)B(2) complex to a putative damaged site, the DNA wraps around one UvrB monomer. DNA wrap is dependent on ATP binding by UvrB and probably causes local melting of the DNA helix, facilitating insertion of UvrB beta-hairpin between the DNA strands. Then UvrB probes one DNA strand for the presence of a lesion. If a lesion is found the UvrA subunits dissociate and the UvrB-DNA preincision complex is formed. This complex is subsequently bound by UvrC and the second UvrB is released. If no lesion is found, the DNA wraps around the other UvrB subunit that will check the other stand for damage. The chain is UvrABC system protein B from Pseudomonas syringae pv. tomato (strain ATCC BAA-871 / DC3000).